We begin with the raw amino-acid sequence, 61 residues long: Small ribosomal subunit protein uS14 (61 aa).

Zn(2+) is bound by residues Cys-24, Cys-27, Cys-40, and Cys-43.

This sequence belongs to the universal ribosomal protein uS14 family. Zinc-binding uS14 subfamily. As to quaternary structure, part of the 30S ribosomal subunit. Contacts proteins S3 and S10. Zn(2+) is required as a cofactor.

Its function is as follows. Binds 16S rRNA, required for the assembly of 30S particles and may also be responsible for determining the conformation of the 16S rRNA at the A site. In Streptococcus pyogenes serotype M49 (strain NZ131), this protein is Small ribosomal subunit protein uS14.